The following is a 335-amino-acid chain: Ketol-acid reductoisomerase (NADP(+)) (335 aa).

In terms of domain architecture, KARI N-terminal Rossmann spans 1 to 182 (MATIIYDDET…GATRAGVYET (182 aa)). Residues 25 to 28 (YGSQ), Arg48, Ser51, Ser53, and 83 to 86 (DEKQ) contribute to the NADP(+) site. Residue His108 is part of the active site. Residue Gly134 coordinates NADP(+). The 146-residue stretch at 183-328 (TFREETETDL…KQIRANIPWL (146 aa)) folds into the KARI C-terminal knotted domain. The Mg(2+) site is built by Asp191, Glu195, Glu227, and Glu231. Position 252 (Ser252) interacts with substrate.

The protein belongs to the ketol-acid reductoisomerase family. Requires Mg(2+) as cofactor.

It catalyses the reaction (2R)-2,3-dihydroxy-3-methylbutanoate + NADP(+) = (2S)-2-acetolactate + NADPH + H(+). The catalysed reaction is (2R,3R)-2,3-dihydroxy-3-methylpentanoate + NADP(+) = (S)-2-ethyl-2-hydroxy-3-oxobutanoate + NADPH + H(+). Its pathway is amino-acid biosynthesis; L-isoleucine biosynthesis; L-isoleucine from 2-oxobutanoate: step 2/4. It participates in amino-acid biosynthesis; L-valine biosynthesis; L-valine from pyruvate: step 2/4. Involved in the biosynthesis of branched-chain amino acids (BCAA). Catalyzes an alkyl-migration followed by a ketol-acid reduction of (S)-2-acetolactate (S2AL) to yield (R)-2,3-dihydroxy-isovalerate. In the isomerase reaction, S2AL is rearranged via a Mg-dependent methyl migration to produce 3-hydroxy-3-methyl-2-ketobutyrate (HMKB). In the reductase reaction, this 2-ketoacid undergoes a metal-dependent reduction by NADPH to yield (R)-2,3-dihydroxy-isovalerate. The protein is Ketol-acid reductoisomerase (NADP(+)) of Methanosarcina mazei (strain ATCC BAA-159 / DSM 3647 / Goe1 / Go1 / JCM 11833 / OCM 88) (Methanosarcina frisia).